The chain runs to 748 residues: 5-methyltetrahydropteroyltriglutamate--homocysteine methyltransferase (748 aa).

5-methyltetrahydropteroyltri-L-glutamate is bound by residues 18 to 21 (REWK) and lysine 112. Residues 420-422 (IGS) and glutamate 473 each bind L-homocysteine. L-methionine-binding positions include 420-422 (IGS) and glutamate 473. Tryptophan 550 is a binding site for 5-methyltetrahydropteroyltri-L-glutamate. Aspartate 588 is a binding site for L-homocysteine. Aspartate 588 serves as a coordination point for L-methionine. Glutamate 594 lines the 5-methyltetrahydropteroyltri-L-glutamate pocket. Positions 630, 632, and 654 each coordinate Zn(2+). The active-site Proton donor is the histidine 683. Cysteine 715 lines the Zn(2+) pocket.

This sequence belongs to the vitamin-B12 independent methionine synthase family. It depends on Zn(2+) as a cofactor.

The catalysed reaction is 5-methyltetrahydropteroyltri-L-glutamate + L-homocysteine = tetrahydropteroyltri-L-glutamate + L-methionine. The protein operates within amino-acid biosynthesis; L-methionine biosynthesis via de novo pathway; L-methionine from L-homocysteine (MetE route): step 1/1. Its function is as follows. Catalyzes the transfer of a methyl group from 5-methyltetrahydrofolate to homocysteine resulting in methionine formation. This Staphylococcus epidermidis (strain ATCC 12228 / FDA PCI 1200) protein is 5-methyltetrahydropteroyltriglutamate--homocysteine methyltransferase.